The chain runs to 341 residues: tRNA N6-adenosine threonylcarbamoyltransferase (341 aa).

The Fe cation site is built by H111 and H115. Residues 134-138, D167, G180, and N276 each bind substrate; that span reads LVSGG. Residue D304 coordinates Fe cation.

It belongs to the KAE1 / TsaD family. The cofactor is Fe(2+).

It is found in the cytoplasm. The enzyme catalyses L-threonylcarbamoyladenylate + adenosine(37) in tRNA = N(6)-L-threonylcarbamoyladenosine(37) in tRNA + AMP + H(+). Its function is as follows. Required for the formation of a threonylcarbamoyl group on adenosine at position 37 (t(6)A37) in tRNAs that read codons beginning with adenine. Is involved in the transfer of the threonylcarbamoyl moiety of threonylcarbamoyl-AMP (TC-AMP) to the N6 group of A37, together with TsaE and TsaB. TsaD likely plays a direct catalytic role in this reaction. The sequence is that of tRNA N6-adenosine threonylcarbamoyltransferase from Pseudomonas syringae pv. syringae (strain B728a).